We begin with the raw amino-acid sequence, 117 residues long: UPF0295 protein RBAM_008830 (117 aa).

2 consecutive transmembrane segments (helical) span residues 13–33 (TFAL…LFFK) and 41–61 (LFMI…FWIG).

Belongs to the UPF0295 family.

It is found in the cell membrane. This chain is UPF0295 protein RBAM_008830, found in Bacillus velezensis (strain DSM 23117 / BGSC 10A6 / LMG 26770 / FZB42) (Bacillus amyloliquefaciens subsp. plantarum).